The chain runs to 257 residues: Tryptophan synthase alpha chain (257 aa).

Residues glutamate 47 and aspartate 58 each act as proton acceptor in the active site.

Belongs to the TrpA family. In terms of assembly, tetramer of two alpha and two beta chains.

The catalysed reaction is (1S,2R)-1-C-(indol-3-yl)glycerol 3-phosphate + L-serine = D-glyceraldehyde 3-phosphate + L-tryptophan + H2O. The protein operates within amino-acid biosynthesis; L-tryptophan biosynthesis; L-tryptophan from chorismate: step 5/5. In terms of biological role, the alpha subunit is responsible for the aldol cleavage of indoleglycerol phosphate to indole and glyceraldehyde 3-phosphate. This is Tryptophan synthase alpha chain from Listeria innocua serovar 6a (strain ATCC BAA-680 / CLIP 11262).